The chain runs to 283 residues: ATP synthase gamma chain (283 aa).

It belongs to the ATPase gamma chain family. F-type ATPases have 2 components, CF(1) - the catalytic core - and CF(0) - the membrane proton channel. CF(1) has five subunits: alpha(3), beta(3), gamma(1), delta(1), epsilon(1). CF(0) has three main subunits: a, b and c.

It is found in the cell membrane. In terms of biological role, produces ATP from ADP in the presence of a proton gradient across the membrane. The gamma chain is believed to be important in regulating ATPase activity and the flow of protons through the CF(0) complex. This Clostridium perfringens (strain ATCC 13124 / DSM 756 / JCM 1290 / NCIMB 6125 / NCTC 8237 / Type A) protein is ATP synthase gamma chain.